A 445-amino-acid chain; its full sequence is Methylenetetrahydrofolate--tRNA-(uracil-5-)-methyltransferase TrmFO (445 aa).

10–15 contributes to the FAD binding site; the sequence is GGGLAG.

This sequence belongs to the MnmG family. TrmFO subfamily. FAD serves as cofactor.

It is found in the cytoplasm. The enzyme catalyses uridine(54) in tRNA + (6R)-5,10-methylene-5,6,7,8-tetrahydrofolate + NADH + H(+) = 5-methyluridine(54) in tRNA + (6S)-5,6,7,8-tetrahydrofolate + NAD(+). It catalyses the reaction uridine(54) in tRNA + (6R)-5,10-methylene-5,6,7,8-tetrahydrofolate + NADPH + H(+) = 5-methyluridine(54) in tRNA + (6S)-5,6,7,8-tetrahydrofolate + NADP(+). Its function is as follows. Catalyzes the folate-dependent formation of 5-methyl-uridine at position 54 (M-5-U54) in all tRNAs. The protein is Methylenetetrahydrofolate--tRNA-(uracil-5-)-methyltransferase TrmFO of Microcystis aeruginosa (strain NIES-843 / IAM M-2473).